The primary structure comprises 115 residues: Large ribosomal subunit protein bL20 (115 aa).

The protein belongs to the bacterial ribosomal protein bL20 family.

Its function is as follows. Binds directly to 23S ribosomal RNA and is necessary for the in vitro assembly process of the 50S ribosomal subunit. It is not involved in the protein synthesizing functions of that subunit. The polypeptide is Large ribosomal subunit protein bL20 (Malacoplasma penetrans (strain HF-2) (Mycoplasma penetrans)).